A 367-amino-acid polypeptide reads, in one-letter code: CCN family member 4 (367 aa).

The signal sequence occupies residues 1 to 22; it reads MRWLLPWTLAAVAVLRVGNILA. Residues 45–118 enclose the IGFBP N-terminal domain; it reads RPEFCKWPCE…RYAIGVCAQV (74 aa). Intrachain disulfides connect Cys49-Cys73, Cys53-Cys75, Cys55-Cys76, and Cys62-Cys79. N-linked (GlcNAc...) asparagine glycosylation occurs at Asn86. 2 cysteine pairs are disulfide-bonded: Cys87–Cys101 and Cys93–Cys115. Residues 121 to 186 enclose the VWFC domain; it reads VGCVLDGVRY…GQCCEQWVCD (66 aa). N-linked (GlcNAc...) asparagine glycosylation occurs at Asn143. In terms of domain architecture, TSP type-1 spans 215–260; that stretch reads NCIAYTSPWSPCSTTCGLGISTRISNVNARCWPEQESRLCNLRPCD. 5 cysteine pairs are disulfide-bonded: Cys273–Cys310, Cys290–Cys324, Cys301–Cys340, Cys304–Cys342, and Cys309–Cys346. In terms of domain architecture, CTCK spans 273–347; the sequence is CLAVYQPEEA…NACFCNLSCR (75 aa). Asn284 carries an N-linked (GlcNAc...) asparagine glycan. N-linked (GlcNAc...) asparagine glycosylation is present at Asn343.

It belongs to the CCN family. Highly expressed in kidney and lung. Lower levels in heart, brain, spleen, liver, skeletal muscle and testis. Expressed in low metastatic melanoma cells.

Its subcellular location is the secreted. Functionally, downstream regulator in the Wnt/Frizzled-signaling pathway. Associated with cell survival. Adheres to skin and melanoma fibroblasts. In vitro binding to skin fibroblasts occurs through the proteoglycans, decorin and biglycan. Suppresses tumor growth in vivo. This Mus musculus (Mouse) protein is CCN family member 4 (Ccn4).